The chain runs to 793 residues: Netrin-B (793 aa).

A signal peptide spans 1 to 22 (MVRATGTRMGLLLPIILALAIG). A Laminin N-terminal domain is found at 39–303 (KPRKCLPSFV…NLQDNDSADA (265 aa)). N-linked (GlcNAc...) asparagine glycans are attached at residues Asn-103, Asn-125, and Asn-298. Positions 332–378 (SVVKRQGKHKGSAYEKHYQSKLAATTPPQQPPKVTPPGKVTPPSTAA) are disordered. The span at 367–378 (PPGKVTPPSTAA) shows a compositional bias: low complexity. 15 disulfides stabilise this stretch: Cys-405/Cys-414, Cys-407/Cys-461, Cys-463/Cys-472, Cys-475/Cys-495, Cys-498/Cys-507, Cys-500/Cys-525, Cys-528/Cys-537, Cys-540/Cys-558, Cys-561/Cys-573, Cys-563/Cys-580, Cys-582/Cys-591, Cys-594/Cys-608, Cys-649/Cys-738, Cys-652/Cys-740, and Cys-665/Cys-792. 3 consecutive Laminin EGF-like domains span residues 405–497 (CKCN…ECKM), 498–560 (CQCN…VCKR), and 561–610 (CDCH…PCIK). The segment at 420 to 446 (SGSGTALSDQDDGQDEDTPSAPSLANH) is disordered. The segment covering 428–437 (DQDDGQDEDT) has biased composition (acidic residues). In terms of domain architecture, NTR spans 649 to 792 (CGKCKASPKK…KRFQRRARKC (144 aa)). The N-linked (GlcNAc...) asparagine glycan is linked to Asn-746.

As to quaternary structure, binds to unc-5 and fra receptors. In terms of tissue distribution, at 24 hr after puparium formation (APF), detected in the most anterior (oldest) L3, L4 and L5 lamina neurons (at protein level). At 48 hr APF, expressed in all L3, L4 and L5 neurons with slightly higher expression in the L3 neurons (at protein level). At the midline of developing CNS and in different subsets of neurons, muscles, and epidermal patches.

It is found in the secreted. Its subcellular location is the extracellular space. It localises to the extracellular matrix. The protein localises to the cytoplasm. The protein resides in the perinuclear region. Netrins control guidance of CNS commissural axons and peripheral motor axons. Its association with either fra or unc-5 receptors will lead to axon attraction or repulsion, respectively. While short-range repulsion requires both fra and unc-5 receptors, long-range repulsion only requires unc-5. This chain is Netrin-B (NetB), found in Drosophila melanogaster (Fruit fly).